The primary structure comprises 1550 residues: Pentafunctional AROM polypeptide (1550 aa).

Positions 1–379 (MSIERVPILG…YQLKAHQVSK (379 aa)) are 3-dehydroquinate synthase. NAD(+) is bound by residues 42–44 (DTN), 80–83 (ENNK), 111–113 (GGV), and D116. R127 serves as a coordination point for 7-phospho-2-dehydro-3-deoxy-D-arabino-heptonate. 136–137 (TT) is a binding site for NAD(+). 7-phospho-2-dehydro-3-deoxy-D-arabino-heptonate is bound by residues D143 and K149. K158 is an NAD(+) binding site. N159 is a binding site for 7-phospho-2-dehydro-3-deoxy-D-arabino-heptonate. Residues 176–179 (FLET) and N187 each bind NAD(+). E191 contacts Zn(2+). 7-phospho-2-dehydro-3-deoxy-D-arabino-heptonate contacts are provided by residues 191-194 (EVVK) and K243. The Proton acceptor; for 3-dehydroquinate synthase activity role is filled by E253. Residues 257 to 261 (RNLLN) and H264 each bind 7-phospho-2-dehydro-3-deoxy-D-arabino-heptonate. A Zn(2+)-binding site is contributed by H264. Residue H268 is the Proton acceptor; for 3-dehydroquinate synthase activity of the active site. 7-phospho-2-dehydro-3-deoxy-D-arabino-heptonate is bound by residues H280 and K351. Position 280 (H280) interacts with Zn(2+). The tract at residues 392 to 837 (VHPFTNPPKE…WDILHSKFKI (446 aa)) is EPSP synthase. Residues 857 to 1047 (DKGVIVIGMR…VPTGRSTAVV (191 aa)) form a shikimate kinase region. ATP is bound at residue 864–871 (GMRGTGKS). A 3-dehydroquinase region spans residues 1048–1257 (LTLPDLNNVA…NDDGLLTIGE (210 aa)). The active-site Schiff-base intermediate with substrate; for 3-dehydroquinate dehydratase activity is the R1193. The segment at 1270 to 1550 (AKKFWVIGSP…EIIHRAVVEE (281 aa)) is shikimate dehydrogenase.

In the N-terminal section; belongs to the sugar phosphate cyclases superfamily. Dehydroquinate synthase family. This sequence in the 2nd section; belongs to the EPSP synthase family. It in the 3rd section; belongs to the shikimate kinase family. The protein in the 4th section; belongs to the type-I 3-dehydroquinase family. In the C-terminal section; belongs to the shikimate dehydrogenase family. As to quaternary structure, homodimer. Requires Zn(2+) as cofactor.

Its subcellular location is the cytoplasm. It carries out the reaction 7-phospho-2-dehydro-3-deoxy-D-arabino-heptonate = 3-dehydroquinate + phosphate. The enzyme catalyses 3-dehydroquinate = 3-dehydroshikimate + H2O. The catalysed reaction is shikimate + NADP(+) = 3-dehydroshikimate + NADPH + H(+). It catalyses the reaction shikimate + ATP = 3-phosphoshikimate + ADP + H(+). It carries out the reaction 3-phosphoshikimate + phosphoenolpyruvate = 5-O-(1-carboxyvinyl)-3-phosphoshikimate + phosphate. The protein operates within metabolic intermediate biosynthesis; chorismate biosynthesis; chorismate from D-erythrose 4-phosphate and phosphoenolpyruvate: step 2/7. It participates in metabolic intermediate biosynthesis; chorismate biosynthesis; chorismate from D-erythrose 4-phosphate and phosphoenolpyruvate: step 3/7. Its pathway is metabolic intermediate biosynthesis; chorismate biosynthesis; chorismate from D-erythrose 4-phosphate and phosphoenolpyruvate: step 4/7. It functions in the pathway metabolic intermediate biosynthesis; chorismate biosynthesis; chorismate from D-erythrose 4-phosphate and phosphoenolpyruvate: step 5/7. The protein operates within metabolic intermediate biosynthesis; chorismate biosynthesis; chorismate from D-erythrose 4-phosphate and phosphoenolpyruvate: step 6/7. Its function is as follows. The AROM polypeptide catalyzes 5 consecutive enzymatic reactions in prechorismate polyaromatic amino acid biosynthesis. This chain is Pentafunctional AROM polypeptide, found in Candida dubliniensis (strain CD36 / ATCC MYA-646 / CBS 7987 / NCPF 3949 / NRRL Y-17841) (Yeast).